We begin with the raw amino-acid sequence, 430 residues long: GPI mannosyltransferase 1 (430 aa).

Topologically, residues 1–11 (MELQSLIDTVS) are cytoplasmic. Residues 12-32 (LQKLLLLGALLRLILIAYAFF) traverse the membrane as a helical segment. Residues 33-72 (HDQWFRVKYTDIDYMIVVDGARHMWNGGSPFDRTTFRYTP) lie on the Lumenal side of the membrane. The helical transmembrane segment at 73-93 (LLAALVMPSIWIANPMGKLIF) threads the bilayer. Residues 94–115 (ASSDLGAAWYCYGVLKSFAKER) are Cytoplasmic-facing. A helical membrane pass occupies residues 116–136 (SAKWMVSLFILFNPIVLSVST). The Lumenal portion of the chain corresponds to 137–163 (RGNSDMLVTFMSLMVLSKFARRKCYQA). Residues 164–184 (AAVLGFAVHFKIYPIIYALPL) form a helical membrane-spanning segment. The Cytoplasmic portion of the chain corresponds to 185–206 (TLGVWEQSVAASTNTWRRVVKT). Residues 207 to 227 (AVVVSICALMAAISFAVPTVL) traverse the membrane as a helical segment. Residues 228-360 (CYMKYGQQYL…AFKFFSWVKA (133 aa)) lie on the Lumenal side of the membrane. A helical membrane pass occupies residues 361–381 (LGVVLMWAATIPLWVTTAVPL). Residues 382–388 (EFHGYSD) lie on the Cytoplasmic side of the membrane. A helical membrane pass occupies residues 389 to 409 (FAQLWIVSCLFFLAMVVLASM). At 410-430 (LARIAYRVQCTKCSAKSIKVA) the chain is on the lumenal side.

Belongs to the PIGM family.

It localises to the endoplasmic reticulum membrane. It functions in the pathway glycolipid biosynthesis; glycosylphosphatidylinositol-anchor biosynthesis. Mannosyltransferase involved in glycosylphosphatidylinositol-anchor biosynthesis. Transfers the first alpha-1,4-mannose to GlcN-PI during GPI precursor assembly. The sequence is that of GPI mannosyltransferase 1 (PIGM) from Trypanosoma brucei brucei (strain 927/4 GUTat10.1).